The primary structure comprises 169 residues: Peptide deformylase (169 aa).

Residues Cys-91 and His-133 each coordinate Fe cation. Glu-134 is a catalytic residue. His-137 is a Fe cation binding site.

This sequence belongs to the polypeptide deformylase family. It depends on Fe(2+) as a cofactor.

It catalyses the reaction N-terminal N-formyl-L-methionyl-[peptide] + H2O = N-terminal L-methionyl-[peptide] + formate. Removes the formyl group from the N-terminal Met of newly synthesized proteins. Requires at least a dipeptide for an efficient rate of reaction. N-terminal L-methionine is a prerequisite for activity but the enzyme has broad specificity at other positions. The polypeptide is Peptide deformylase (Shigella boydii serotype 18 (strain CDC 3083-94 / BS512)).